The following is a 159-amino-acid chain: Cyclic pyranopterin monophosphate synthase (159 aa).

Residues 75-77 (LCH) and 113-114 (ME) contribute to the substrate site. The active site involves Asp-128.

This sequence belongs to the MoaC family. In terms of assembly, homohexamer; trimer of dimers.

It carries out the reaction (8S)-3',8-cyclo-7,8-dihydroguanosine 5'-triphosphate = cyclic pyranopterin phosphate + diphosphate. Its pathway is cofactor biosynthesis; molybdopterin biosynthesis. In terms of biological role, catalyzes the conversion of (8S)-3',8-cyclo-7,8-dihydroguanosine 5'-triphosphate to cyclic pyranopterin monophosphate (cPMP). This is Cyclic pyranopterin monophosphate synthase from Vibrio vulnificus (strain YJ016).